The chain runs to 338 residues: Uroporphyrinogen decarboxylase (338 aa).

Residues 21–25 (RQAGR), aspartate 71, tyrosine 146, serine 201, and histidine 316 contribute to the substrate site.

It belongs to the uroporphyrinogen decarboxylase family. Homodimer.

The protein localises to the cytoplasm. It carries out the reaction uroporphyrinogen III + 4 H(+) = coproporphyrinogen III + 4 CO2. It functions in the pathway porphyrin-containing compound metabolism; protoporphyrin-IX biosynthesis; coproporphyrinogen-III from 5-aminolevulinate: step 4/4. Catalyzes the decarboxylation of four acetate groups of uroporphyrinogen-III to yield coproporphyrinogen-III. This is Uroporphyrinogen decarboxylase from Rickettsia akari (strain Hartford).